The following is a 225-amino-acid chain: Ribose-5-phosphate isomerase A (225 aa).

Residues 32–35, 85–88, and 98–101 contribute to the substrate site; these read TGST, DGAD, and KGGG. Glutamate 107 acts as the Proton acceptor in catalysis. Lysine 125 is a binding site for substrate.

This sequence belongs to the ribose 5-phosphate isomerase family. As to quaternary structure, homodimer.

The catalysed reaction is aldehydo-D-ribose 5-phosphate = D-ribulose 5-phosphate. It participates in carbohydrate degradation; pentose phosphate pathway; D-ribose 5-phosphate from D-ribulose 5-phosphate (non-oxidative stage): step 1/1. Catalyzes the reversible conversion of ribose-5-phosphate to ribulose 5-phosphate. This Marinobacter nauticus (strain ATCC 700491 / DSM 11845 / VT8) (Marinobacter aquaeolei) protein is Ribose-5-phosphate isomerase A.